Here is a 462-residue protein sequence, read N- to C-terminus: Cysteine--tRNA ligase (462 aa).

Zn(2+) is bound at residue C27. The 'HIGH' region signature appears at 29–39 (PTVYDLAHIGN). Residues C211, H236, and E240 each contribute to the Zn(2+) site. The short motif at 270–274 (KMSKS) is the 'KMSKS' region element. An ATP-binding site is contributed by K273.

This sequence belongs to the class-I aminoacyl-tRNA synthetase family. Monomer. Requires Zn(2+) as cofactor.

It localises to the cytoplasm. The enzyme catalyses tRNA(Cys) + L-cysteine + ATP = L-cysteinyl-tRNA(Cys) + AMP + diphosphate. This chain is Cysteine--tRNA ligase, found in Anaplasma phagocytophilum (strain HZ).